A 290-amino-acid chain; its full sequence is Bifunctional protein FolD (290 aa).

NADP(+)-binding positions include 167-169 (GRS), Ser192, and Ile233.

This sequence belongs to the tetrahydrofolate dehydrogenase/cyclohydrolase family. As to quaternary structure, homodimer.

The enzyme catalyses (6R)-5,10-methylene-5,6,7,8-tetrahydrofolate + NADP(+) = (6R)-5,10-methenyltetrahydrofolate + NADPH. It catalyses the reaction (6R)-5,10-methenyltetrahydrofolate + H2O = (6R)-10-formyltetrahydrofolate + H(+). Its pathway is one-carbon metabolism; tetrahydrofolate interconversion. Functionally, catalyzes the oxidation of 5,10-methylenetetrahydrofolate to 5,10-methenyltetrahydrofolate and then the hydrolysis of 5,10-methenyltetrahydrofolate to 10-formyltetrahydrofolate. This is Bifunctional protein FolD from Gloeobacter violaceus (strain ATCC 29082 / PCC 7421).